Consider the following 529-residue polypeptide: Lysine--tRNA ligase (529 aa).

The short motif at 29–37 is the 'HIGH' region element; the sequence is ISGSVHIGN. Positions 274–278 match the 'KMSKS' region motif; that stretch reads AMSKS. K277 serves as a coordination point for ATP.

The protein belongs to the class-I aminoacyl-tRNA synthetase family.

The protein localises to the cytoplasm. It carries out the reaction tRNA(Lys) + L-lysine + ATP = L-lysyl-tRNA(Lys) + AMP + diphosphate. This Methanosphaera stadtmanae (strain ATCC 43021 / DSM 3091 / JCM 11832 / MCB-3) protein is Lysine--tRNA ligase.